The following is an 86-amino-acid chain: UPF0147 protein PYRAB16980 (86 aa).

The protein belongs to the UPF0147 family.

The chain is UPF0147 protein PYRAB16980 from Pyrococcus abyssi (strain GE5 / Orsay).